We begin with the raw amino-acid sequence, 126 residues long: MLKITKICLASSATSTAQRSIALTAPRAIDQKWRAAKGLPENPNAFGPLTNLPDYTYLDGRPTPLGANQKRRLIKQQEIATRIVELSGELEFAKQRHERLKANAESEKQRLIRSKLKPKGHFLLKK.

The N-terminal 28 residues, 1 to 28, are a transit peptide targeting the mitochondrion; the sequence is MLKITKICLASSATSTAQRSIALTAPRA.

The protein belongs to the mitochondrion-specific ribosomal protein mL52 family. Component of the mitochondrial ribosome large subunit (39S) which comprises a 16S rRNA and about 50 distinct proteins.

It is found in the mitochondrion. The chain is Large ribosomal subunit protein mL52 (mRpL52) from Drosophila melanogaster (Fruit fly).